Reading from the N-terminus, the 296-residue chain is Probable endonuclease 4 (296 aa).

Zn(2+)-binding residues include His68, His109, Glu144, Asp178, His181, His213, Asp226, His228, and Glu258.

It belongs to the AP endonuclease 2 family. Requires Zn(2+) as cofactor.

The enzyme catalyses Endonucleolytic cleavage to 5'-phosphooligonucleotide end-products.. Endonuclease IV plays a role in DNA repair. It cleaves phosphodiester bonds at apurinic or apyrimidinic (AP) sites, generating a 3'-hydroxyl group and a 5'-terminal sugar phosphate. This is Probable endonuclease 4 from Staphylococcus aureus (strain MRSA252).